We begin with the raw amino-acid sequence, 136 residues long: Protein YebF (136 aa).

The first 23 residues, 1–23 (MKKTGLALVLATILLGMMGSVHA), serve as a signal peptide directing secretion. One can recognise a YebF/Cmi domain in the interval 30–117 (KVPACIGLNQ…KSGTMTYTGL (88 aa)). A disulfide bond links C34 and C107. Positions 117 to 136 (LNAQTRPDPQIGLNSQAGPK) are disordered.

This sequence belongs to the YebF family.

It localises to the secreted. The protein is Protein YebF of Yersinia pseudotuberculosis serotype O:1b (strain IP 31758).